The chain runs to 185 residues: MYLFINIIWRNFISKNNLPKANREIKAKEVRLVDENSEMYGVVNIREALDMAERAGLDLVEISPNAVPPVCKILDFGKFKYESKKRLHEARKKQKVVVLKEMKFKPNISIGDFETKLRKIKEFLKDGDKVKISLWFKGREILHKEVGHELFKRIELALEGLIKIDQHAKMEGKQMIMIVSPDIKV.

It belongs to the IF-3 family. As to quaternary structure, monomer.

It is found in the cytoplasm. IF-3 binds to the 30S ribosomal subunit and shifts the equilibrium between 70S ribosomes and their 50S and 30S subunits in favor of the free subunits, thus enhancing the availability of 30S subunits on which protein synthesis initiation begins. This chain is Translation initiation factor IF-3, found in Rickettsia prowazekii (strain Madrid E).